The sequence spans 88 residues: MNLGPTEILLILVIVVLLFGAKKLPDAARSLGRSMRIFKSEVKEMSNDDQRYEEQQQQRQIAAQAQQQVVNPVEIPQPQPTDIQRPQQ.

A helical transmembrane segment spans residues 1–21; sequence MNLGPTEILLILVIVVLLFGA. The segment covering 46–56 has biased composition (basic and acidic residues); the sequence is SNDDQRYEEQQ. The tract at residues 46–88 is disordered; that stretch reads SNDDQRYEEQQQQRQIAAQAQQQVVNPVEIPQPQPTDIQRPQQ. Low complexity predominate over residues 57-68; the sequence is QQRQIAAQAQQQ.

Belongs to the TatA/E family. In terms of assembly, the Tat system comprises two distinct complexes: a TatABC complex, containing multiple copies of TatA, TatB and TatC subunits, and a separate TatA complex, containing only TatA subunits. Substrates initially bind to the TatABC complex, which probably triggers association of the separate TatA complex to form the active translocon.

The protein localises to the cell membrane. Part of the twin-arginine translocation (Tat) system that transports large folded proteins containing a characteristic twin-arginine motif in their signal peptide across membranes. TatA could form the protein-conducting channel of the Tat system. The polypeptide is Sec-independent protein translocase protein TatA (Corynebacterium diphtheriae (strain ATCC 700971 / NCTC 13129 / Biotype gravis)).